A 366-amino-acid polypeptide reads, in one-letter code: Chorismate synthase (366 aa).

The NADP(+) site is built by Arg48 and Arg54. FMN-binding positions include 125 to 127 (RSS), 238 to 239 (NA), Gly278, 293 to 297 (KPTSS), and Arg319.

The protein belongs to the chorismate synthase family. In terms of assembly, homotetramer. Requires FMNH2 as cofactor.

The catalysed reaction is 5-O-(1-carboxyvinyl)-3-phosphoshikimate = chorismate + phosphate. Its pathway is metabolic intermediate biosynthesis; chorismate biosynthesis; chorismate from D-erythrose 4-phosphate and phosphoenolpyruvate: step 7/7. Its function is as follows. Catalyzes the anti-1,4-elimination of the C-3 phosphate and the C-6 proR hydrogen from 5-enolpyruvylshikimate-3-phosphate (EPSP) to yield chorismate, which is the branch point compound that serves as the starting substrate for the three terminal pathways of aromatic amino acid biosynthesis. This reaction introduces a second double bond into the aromatic ring system. The protein is Chorismate synthase of Ralstonia nicotianae (strain ATCC BAA-1114 / GMI1000) (Ralstonia solanacearum).